The primary structure comprises 196 residues: Guanylate kinase (196 aa).

One can recognise a Guanylate kinase-like domain in the interval 8 to 191; that stretch reads GRLIVLTGPT…AAADLWSVIA (184 aa). 15 to 22 lines the ATP pocket; that stretch reads GPTAVGKG.

It belongs to the guanylate kinase family.

It is found in the cytoplasm. It catalyses the reaction GMP + ATP = GDP + ADP. Its function is as follows. Essential for recycling GMP and indirectly, cGMP. In Bifidobacterium longum (strain NCC 2705), this protein is Guanylate kinase.